The chain runs to 507 residues: ATP synthase subunit alpha (507 aa).

Gly-171 to Thr-178 lines the ATP pocket.

It belongs to the ATPase alpha/beta chains family. In terms of assembly, F-type ATPases have 2 components, CF(1) - the catalytic core - and CF(0) - the membrane proton channel. CF(1) has five subunits: alpha(3), beta(3), gamma(1), delta(1), epsilon(1). CF(0) has three main subunits: a(1), b(2) and c(9-12). The alpha and beta chains form an alternating ring which encloses part of the gamma chain. CF(1) is attached to CF(0) by a central stalk formed by the gamma and epsilon chains, while a peripheral stalk is formed by the delta and b chains.

Its subcellular location is the cell inner membrane. The catalysed reaction is ATP + H2O + 4 H(+)(in) = ADP + phosphate + 5 H(+)(out). In terms of biological role, produces ATP from ADP in the presence of a proton gradient across the membrane. The alpha chain is a regulatory subunit. This is ATP synthase subunit alpha from Bdellovibrio bacteriovorus (strain ATCC 15356 / DSM 50701 / NCIMB 9529 / HD100).